A 157-amino-acid chain; its full sequence is Ribosomal RNA large subunit methyltransferase H (157 aa).

S-adenosyl-L-methionine contacts are provided by residues L73, G105, and L124 to F129.

It belongs to the RNA methyltransferase RlmH family. In terms of assembly, homodimer.

Its subcellular location is the cytoplasm. It carries out the reaction pseudouridine(1915) in 23S rRNA + S-adenosyl-L-methionine = N(3)-methylpseudouridine(1915) in 23S rRNA + S-adenosyl-L-homocysteine + H(+). Functionally, specifically methylates the pseudouridine at position 1915 (m3Psi1915) in 23S rRNA. The sequence is that of Ribosomal RNA large subunit methyltransferase H from Flavobacterium johnsoniae (strain ATCC 17061 / DSM 2064 / JCM 8514 / BCRC 14874 / CCUG 350202 / NBRC 14942 / NCIMB 11054 / UW101) (Cytophaga johnsonae).